The following is a 214-amino-acid chain: Pyridoxine/pyridoxamine 5'-phosphate oxidase (214 aa).

Substrate contacts are provided by residues 7–10 and Lys65; that span reads REEY. FMN contacts are provided by residues 60–65, 75–76, Arg81, Lys82, and Gln104; these read RTVLLK and FT. The substrate site is built by Tyr122, Arg126, and Ser130. Residues 139–140 and Trp184 each bind FMN; that span reads QS. 190–192 contacts substrate; that stretch reads RLH. Arg194 is a binding site for FMN.

It belongs to the pyridoxamine 5'-phosphate oxidase family. Homodimer. Requires FMN as cofactor.

It carries out the reaction pyridoxamine 5'-phosphate + O2 + H2O = pyridoxal 5'-phosphate + H2O2 + NH4(+). It catalyses the reaction pyridoxine 5'-phosphate + O2 = pyridoxal 5'-phosphate + H2O2. Its pathway is cofactor metabolism; pyridoxal 5'-phosphate salvage; pyridoxal 5'-phosphate from pyridoxamine 5'-phosphate: step 1/1. The protein operates within cofactor metabolism; pyridoxal 5'-phosphate salvage; pyridoxal 5'-phosphate from pyridoxine 5'-phosphate: step 1/1. Functionally, catalyzes the oxidation of either pyridoxine 5'-phosphate (PNP) or pyridoxamine 5'-phosphate (PMP) into pyridoxal 5'-phosphate (PLP). This Crocosphaera subtropica (strain ATCC 51142 / BH68) (Cyanothece sp. (strain ATCC 51142)) protein is Pyridoxine/pyridoxamine 5'-phosphate oxidase.